A 502-amino-acid chain; its full sequence is Nondiscriminating glutamyl-tRNA synthetase EARS2, mitochondrial (502 aa).

The N-terminal 20 residues, M1–F20, are a transit peptide targeting the mitochondrion. Residue R19–G21 coordinates L-glutamate. Residues P24 to G32 carry the 'HIGH' region motif. H29 contributes to the ATP binding site. L-glutamate is bound by residues E55, Y207 to N211, and R225. Residues E228 and K263 to R267 contribute to the ATP site. Positions K263–R267 match the 'KMSKS' region motif.

The protein belongs to the class-I aminoacyl-tRNA synthetase family. Glutamate--tRNA ligase type 1 subfamily.

Its subcellular location is the mitochondrion matrix. The enzyme catalyses tRNA(Glx) + L-glutamate + ATP = L-glutamyl-tRNA(Glx) + AMP + diphosphate. It carries out the reaction tRNA(Glu) + L-glutamate + ATP = L-glutamyl-tRNA(Glu) + AMP + diphosphate. The catalysed reaction is tRNA(Gln) + L-glutamate + ATP = L-glutamyl-tRNA(Gln) + AMP + diphosphate. Its function is as follows. Non-discriminating glutamyl-tRNA synthetase that catalyzes aminoacylation of both mitochondrial tRNA(Glu) and tRNA(Gln) and participates in RNA aminoacylation for mitochondrial protein translation. Attachs glutamate to tRNA(Glu) or tRNA(Gln) in a two-step reaction: glutamate is first activated by ATP to form Glu-AMP and then transferred to the acceptor end of tRNA(Glu) or tRNA(Gln). The sequence is that of Nondiscriminating glutamyl-tRNA synthetase EARS2, mitochondrial from Gallus gallus (Chicken).